A 558-amino-acid chain; its full sequence is Thermosome subunit alpha (558 aa).

The disordered stretch occupies residues 536–558; it reads TEKGKKEGGEGAGAETPGAPSLE. Low complexity predominate over residues 548–558; it reads GAETPGAPSLE.

It belongs to the TCP-1 chaperonin family. In terms of assembly, forms a Heterooligomeric complex of two stacked eight-membered rings.

Molecular chaperone; binds unfolded polypeptides in vitro, and has a weak ATPase activity. In Sulfolobus acidocaldarius (strain ATCC 33909 / DSM 639 / JCM 8929 / NBRC 15157 / NCIMB 11770), this protein is Thermosome subunit alpha (thsA).